The primary structure comprises 175 residues: uncharacterized protein (175 aa).

The segment at 71 to 166 adopts a DNL-type zinc-finger fold; it reads QPKPTYNVSF…KPPQFKIRPA (96 aa). Residues C82, C85, C107, and C110 each contribute to the Zn(2+) site.

This is an uncharacterized protein from Schizosaccharomyces pombe (strain 972 / ATCC 24843) (Fission yeast).